The sequence spans 641 residues: Mannosyl-oligosaccharide 1,2-alpha-mannosidase IB (641 aa).

At Thr-2 the chain carries N-acetylthreonine. The Cytoplasmic segment spans residues 2–36 (TTPALLPLSGRRIPPLNLGPPSFPHHRATLRLSEK). The helical; Signal-anchor for type II membrane protein transmembrane segment at 37 to 57 (FILLLILSAFITLCFGAFFFL) threads the bilayer. Over 58–641 (PDSSKHKRFD…TTLSGNPAVR (584 aa)) the chain is Lumenal. The disordered stretch occupies residues 153–175 (NKPLPPVPIPNLVGIRGGDPEDN). Cys-462 and Cys-494 form a disulfide bridge. The active-site Proton donor is the Glu-508. Ca(2+) is bound at residue Thr-619. Asn-631 carries N-linked (GlcNAc...) asparagine glycosylation.

This sequence belongs to the glycosyl hydrolase 47 family. Ca(2+) serves as cofactor. Highest levels of expression in placenta and testis.

It is found in the golgi apparatus membrane. The catalysed reaction is N(4)-(alpha-D-Man-(1-&gt;2)-alpha-D-Man-(1-&gt;2)-alpha-D-Man-(1-&gt;3)-[alpha-D-Man-(1-&gt;2)-alpha-D-Man-(1-&gt;3)-[alpha-D-Man-(1-&gt;2)-alpha-D-Man-(1-&gt;6)]-alpha-D-Man-(1-&gt;6)]-beta-D-Man-(1-&gt;4)-beta-D-GlcNAc-(1-&gt;4)-beta-D-GlcNAc)-L-asparaginyl-[protein] (N-glucan mannose isomer 9A1,2,3B1,2,3) + 4 H2O = N(4)-(alpha-D-Man-(1-&gt;3)-[alpha-D-Man-(1-&gt;3)-[alpha-D-Man-(1-&gt;6)]-alpha-D-Man-(1-&gt;6)]-beta-D-Man-(1-&gt;4)-beta-D-GlcNAc-(1-&gt;4)-beta-D-GlcNAc)-L-asparaginyl-[protein] (N-glucan mannose isomer 5A1,2) + 4 beta-D-mannose. The enzyme catalyses N(4)-(alpha-D-Man-(1-&gt;2)-alpha-D-Man-(1-&gt;2)-alpha-D-Man-(1-&gt;3)-[alpha-D-Man-(1-&gt;3)-[alpha-D-Man-(1-&gt;2)-alpha-D-Man-(1-&gt;6)]-alpha-D-Man-(1-&gt;6)]-beta-D-Man-(1-&gt;4)-beta-D-GlcNAc-(1-&gt;4)-beta-D-GlcNAc)-L-asparaginyl-[protein] (N-glucan mannose isomer 8A1,2,3B1,3) + 3 H2O = N(4)-(alpha-D-Man-(1-&gt;3)-[alpha-D-Man-(1-&gt;3)-[alpha-D-Man-(1-&gt;6)]-alpha-D-Man-(1-&gt;6)]-beta-D-Man-(1-&gt;4)-beta-D-GlcNAc-(1-&gt;4)-beta-D-GlcNAc)-L-asparaginyl-[protein] (N-glucan mannose isomer 5A1,2) + 3 beta-D-mannose. The protein operates within protein modification; protein glycosylation. With respect to regulation, inhibited by both 1-deoxymannojirimycin and kifunensine. In terms of biological role, involved in the maturation of Asn-linked oligosaccharides. Progressively trim alpha-1,2-linked mannose residues from Man(9)GlcNAc(2) to produce Man(5)GlcNAc(2). The polypeptide is Mannosyl-oligosaccharide 1,2-alpha-mannosidase IB (MAN1A2) (Homo sapiens (Human)).